Reading from the N-terminus, the 277-residue chain is Phosphate import ATP-binding protein PstB (277 aa).

An ABC transporter domain is found at 31 to 272 (IEVPGLSLYY…PAKKQTEDYI (242 aa)). 63–70 (GPSGCGKS) lines the ATP pocket.

Belongs to the ABC transporter superfamily. Phosphate importer (TC 3.A.1.7) family. In terms of assembly, the complex is composed of two ATP-binding proteins (PstB), two transmembrane proteins (PstC and PstA) and a solute-binding protein (PstS).

The protein resides in the cell inner membrane. It carries out the reaction phosphate(out) + ATP + H2O = ADP + 2 phosphate(in) + H(+). Its function is as follows. Part of the ABC transporter complex PstSACB involved in phosphate import. Responsible for energy coupling to the transport system. In Pseudomonas fluorescens (strain ATCC BAA-477 / NRRL B-23932 / Pf-5), this protein is Phosphate import ATP-binding protein PstB.